The following is a 115-amino-acid chain: Histidine decarboxylase proenzyme (115 aa).

Residue Ser-83 is modified to Pyruvic acid (Ser).

In terms of assembly, the proenzyme is a hexamer of identical pi chains; each pi chain monomer is cleaved to form a small (or beta) chain and a large (or alpha) chain by non-hydrolytic self-catalysis. Pyruvate serves as cofactor.

The catalysed reaction is L-histidine + H(+) = histamine + CO2. This Lentilactobacillus buchneri (Lactobacillus buchneri) protein is Histidine decarboxylase proenzyme.